A 319-amino-acid polypeptide reads, in one-letter code: tRNA pseudouridine synthase B (319 aa).

Asp-49 functions as the Nucleophile in the catalytic mechanism.

It belongs to the pseudouridine synthase TruB family. Type 1 subfamily.

It catalyses the reaction uridine(55) in tRNA = pseudouridine(55) in tRNA. Its function is as follows. Responsible for synthesis of pseudouridine from uracil-55 in the psi GC loop of transfer RNAs. In Aeromonas salmonicida (strain A449), this protein is tRNA pseudouridine synthase B.